A 155-amino-acid polypeptide reads, in one-letter code: Small ribosomal subunit protein uS7c (155 aa).

The protein belongs to the universal ribosomal protein uS7 family. Part of the 30S ribosomal subunit.

Its subcellular location is the plastid. The protein localises to the chloroplast. Its function is as follows. One of the primary rRNA binding proteins, it binds directly to 16S rRNA where it nucleates assembly of the head domain of the 30S subunit. The sequence is that of Small ribosomal subunit protein uS7c (rps7) from Saruma henryi (Upright wild ginger).